A 525-amino-acid polypeptide reads, in one-letter code: GMP synthase [glutamine-hydrolyzing] (525 aa).

One can recognise a Glutamine amidotransferase type-1 domain in the interval 8 to 207 (KILILDFGSQ…ALDICGCAAN (200 aa)). The active-site Nucleophile is the Cys-85. Residues His-181 and Glu-183 contribute to the active site. The region spanning 208-400 (WKPSSIIEDA…LGLPYNMLYR (193 aa)) is the GMPS ATP-PPase domain. 235-241 (SGGVDSS) lines the ATP pocket.

Homodimer.

It catalyses the reaction XMP + L-glutamine + ATP + H2O = GMP + L-glutamate + AMP + diphosphate + 2 H(+). It functions in the pathway purine metabolism; GMP biosynthesis; GMP from XMP (L-Gln route): step 1/1. In terms of biological role, catalyzes the synthesis of GMP from XMP. The polypeptide is GMP synthase [glutamine-hydrolyzing] (Shewanella baltica (strain OS223)).